The chain runs to 811 residues: MDSPGGVTDKKRISSERRKEKSRDAARCRRSKESEVFYELAHQLPLPHTVSAHLDKASIMRLTISYLRMRKLLDAGELETEANMEKELNCFYLKALDGFVMVLSEDGDMIYMSENVNKCMGLTQFDLTGHSVFDFTHPCDHEELREMLTHRNGPVKKGKEQNTERSFFLRMKCTLTSRGRTVNIKSATWKVLHCTGHIRVYDTCNNQTHCGYKKPPMTCLVLICEPIPHPSNIEVPLDSKTFLSRHSLDMKFSYCDERITELMGYEPEELLGRSIYEYYHALDSDHLTKTHHDMFTKGQVTTGQYRMLAKQGGYVWVETQATVIYNTKNSQPQCIVCVNYVLSGIVQKDLIFSLGQTECMLKPVESPEMKMTKIFSKDDWDDTNSLFEKLKQEPDALTVLAPAAGDTIISLDFSSNESDEQQCDEVPLYNDVMLPSSSEKLQNINIAMSPLPASETTKPLRSNADPALNREVVSKLEPNTETLELSFTMPQVQEQPTSPSDASTSQSSPEPSSPNDYCFDVDNDMANEFKLELVEKLFAIDTEAKNPFSTQETDLDLEMLAPYIPMDDDFQLRSFDQLSPLESSSSGSQNAATITILQQTQTPSTAADEIKPVAERVDDVKALIVPSSPVHVINDTSSAPASPYSGNRSRTASPIRAGKGTLEQTEKSCPGAPSLITVTLNKRSTAMDEELNPKMLALHNAQRKRKMEHDGSLFQAVGIGSLFQQTGDRGGNASLAWKRVKACKTNGHNGVEQKTIILLSTDIASKLLGQSMDESGLPQLTSYDCEVNAPIQGNRNLLQGEELLRALDQVN.

Residues 1–27 (MDSPGGVTDKKRISSERRKEKSRDAAR) are disordered. Residues 8–27 (TDKKRISSERRKEKSRDAAR) are compositionally biased toward basic and acidic residues. In terms of domain architecture, bHLH spans 17–70 (RRKEKSRDAARCRRSKESEVFYELAHQLPLPHTVSAHLDKASIMRLTISYLRMR). 2 consecutive PAS domains span residues 80–157 (TEAN…PVKK) and 228–298 (PHPS…FTKG). Residues 302–345 (TGQYRMLAKQGGYVWVETQATVIYNTKNSQPQCIVCVNYVLSGI) enclose the PAC domain. The tract at residues 401–587 (APAAGDTIIS…LSPLESSSSG (187 aa)) is ODD. Pro402 bears the 4-hydroxyproline mark. The disordered stretch occupies residues 490–518 (PQVQEQPTSPSDASTSQSSPEPSSPNDYC). Positions 496 to 514 (PTSPSDASTSQSSPEPSSP) are enriched in low complexity. Positions 529–573 (FKLELVEKLFAIDTEAKNPFSTQETDLDLEMLAPYIPMDDDFQLR) are NTAD. Residue Pro562 is modified to 4-hydroxyproline. The tract at residues 576–785 (DQLSPLESSS…GLPQLTSYDC (210 aa)) is ID. Residues 634-652 (NDTSSAPASPYSGNRSRTA) are compositionally biased toward polar residues. The disordered stretch occupies residues 634-655 (NDTSSAPASPYSGNRSRTASPI). Short sequence motifs (nuclear localization signal) lie at residues 703-706 (RKRK) and 718-721 (GIGS). The CTAD stretch occupies residues 771–811 (SMDESGLPQLTSYDCEVNAPIQGNRNLLQGEELLRALDQVN). A (3S)-3-hydroxyasparagine modification is found at Asn788.

Efficient DNA binding requires heterodimerization of an alpha and a beta/ARNT subunit. In normoxia, is hydroxylated on Pro-402 and Pro-562. The hydroxylated prolines promote interaction with VHL, initiating rapid ubiquitination and subsequent proteasomal degradation. Under hypoxia, proline hydroxylation is impaired and ubiquitination is attenuated, resulting in stabilization. Post-translationally, in normoxia, is hydroxylated on Asn-788, thus abrogating interaction with CREBBP and EP300 and preventing transcriptional activation. In terms of processing, the iron and 2-oxoglutarate dependent 3-hydroxylation of asparagine is (S) stereospecific within HIF CTAD domains.

The protein resides in the cytoplasm. It is found in the nucleus. The protein localises to the nucleus speckle. Induced by reactive oxygen species (ROS). In terms of biological role, functions as a master transcriptional regulator of the adaptive response to hypoxia. Under hypoxic conditions, activates the transcription of over 40 genes, including erythropoietin, glucose transporters, glycolytic enzymes, vascular endothelial growth factor, HILPDA, and other genes whose protein products increase oxygen delivery or facilitate metabolic adaptation to hypoxia. Plays an essential role in embryonic vascularization, tumor angiogenesis and pathophysiology of ischemic disease. The polypeptide is Hypoxia-inducible factor 1-alpha (HIF1A) (Gallus gallus (Chicken)).